The primary structure comprises 87 residues: Translation initiation factor IF-1 (87 aa).

Residues 16–87 form the S1-like domain; the sequence is LSKEDVIEME…TKGRISYRHK (72 aa).

It belongs to the IF-1 family. Component of the 30S ribosomal translation pre-initiation complex which assembles on the 30S ribosome in the order IF-2 and IF-3, IF-1 and N-formylmethionyl-tRNA(fMet); mRNA recruitment can occur at any time during PIC assembly.

Its subcellular location is the cytoplasm. Its function is as follows. One of the essential components for the initiation of protein synthesis. Stabilizes the binding of IF-2 and IF-3 on the 30S subunit to which N-formylmethionyl-tRNA(fMet) subsequently binds. Helps modulate mRNA selection, yielding the 30S pre-initiation complex (PIC). Upon addition of the 50S ribosomal subunit IF-1, IF-2 and IF-3 are released leaving the mature 70S translation initiation complex. In Magnetococcus marinus (strain ATCC BAA-1437 / JCM 17883 / MC-1), this protein is Translation initiation factor IF-1.